The primary structure comprises 352 residues: MFAAATKSFVKQVGDGGRLVPVPSLSEADKYQPLSLVVKKKRCFLFPRCKFTSTPFTLKDILLGDREISAGISSYQLLNYEDESDVSLYGRRSNHIVNDVGINVTGSDSIAVKASFGVVTKHEVEVSTLLKEITARKINFDHSLIRQSRSSRKAVLCVVMESIRTTRQCSLSVHAGIRGEAMRFHFMDEQNPKGREKAIVFPAHTTIAFSVFELFIYLDGAFDICVTSVSKGGFEREETTTFAMFYRLRNILFERNRRVMDAISRSQLYLDDLFSDFYDKPLSMTDISLKEGTHIRVNLLNHNIPKGPCILCGMGNLKRETVYGCFQCSVDGVKYVRLHAVPCFDIWHKRMK.

Belongs to the gasdermin family. Interacts with MAP1LC3B; interaction is direct. Interacts with IQGAP1. Interacts with ROCK2. Interacts with TRIOBP. As to expression, in ear, it is detected in the organ of Corti and the spiral ganglion within the cochlea in the sensory areas of the vestibule (cristae ampullares of the semicircular ducts, and maculae of the saccule and utricle) and in the first 3 relays (cochlear nuclei, superior olivary complex and inferior colliculus) of the afferent auditory pathway. Detected in hair cells of the cochlea and vestibule but not in neurons. In the afferent auditory pathway, it is present in the cell bodies of neurons but not in fiber bundles such as the trapezoid body in the brainstem. Also detected in spiral ganglion cells, which form the auditory nerve and project to the cochlear nuclei in the brainstem. Also present in the cochlear nuclei, the superior olive and the inferior colliculus (at protein level). Expressed in all the adult organs tested: brain, eye, inner ear, heart, lung, kidney, liver, intestine, testis and weakly in skeletal muscle.

It is found in the peroxisome membrane. The protein localises to the cell projection. Its subcellular location is the cilium. Functionally, peroxisome-associated protein required to protect auditory hair cells against noise-induced damage. Acts by regulating noise-induced peroxisome proliferation in auditory hair cells and neurons, and promoting autophagic degradation of damaged peroxisomes (pexophagy). Noise overexposure increases reactive oxygen species (ROS) levels, causing oxidative damage to auditory hair cells and resulting in hearing loss. PJVK acts as a ROS sensor that recruits the autophagy machinery to trigger pexophagy of peroxisomes damaged by oxidative stress. In addition to pexophagy, also required to promote peroxisome proliferation in response to sound overstimulation. The chain is Pejvakin from Mus musculus (Mouse).